A 315-amino-acid polypeptide reads, in one-letter code: CAAX prenyl protease 2 (315 aa).

Residues 1–3 (MLQ) are Lumenal-facing. A helical transmembrane segment spans residues 4–23 (FSTFLVLLYISISYVLPLYA). The Cytoplasmic segment spans residues 24 to 44 (TSQPEGSKRDNPRTIKSRMQK). A helical membrane pass occupies residues 45–65 (LTIMLISNLFLVPFLQSQLSS). Residues 66–74 (TTSHISFKD) lie on the Lumenal side of the membrane. The chain crosses the membrane as a helical span at residues 75–95 (AFLGLGIIPGYYAALPNPWQF). Residues 96 to 105 (SQFVKDLTKC) are Cytoplasmic-facing. The chain crosses the membrane as a helical span at residues 106–126 (VAMLLTLYCGPVLDFVLYHLL). Residues 127-148 (NPKSSILEDFYHEFLNIWSFRN) lie on the Lumenal side of the membrane. Residues 149–169 (FIFAPITEEIFYTSMLLTTYL) form a helical membrane-spanning segment. Active-site proton donor/acceptor residues include E156 and H194. Topologically, residues 170-208 (NLIPHSQLSYQQLFWQPSLFFGLAHAHHAYEQLQEGSMT) are cytoplasmic. A helical transmembrane segment spans residues 209–229 (TVSILLTTCFQILYTTLFGGL). Over 230–237 (TKFVFVRT) the chain is Lumenal. A helical membrane pass occupies residues 238 to 258 (GGNLWCCIILHALCNIMGFPG). Topologically, residues 259–275 (PSRLNLHFTVVDKKAGR) are cytoplasmic. A helical transmembrane segment spans residues 276–296 (ISKLVSIWNKCYFALLVLGLI). The Lumenal portion of the chain corresponds to 297-315 (SLKDTLQTLVGTPGYRITL).

The protein belongs to the peptidase U48 family.

Its subcellular location is the endoplasmic reticulum membrane. The enzyme catalyses Hydrolyzes the peptide bond -P2-(S-farnesyl or geranylgeranyl)C-P1'-P2'-P3'-COOH where P1' and P2' are amino acids with aliphatic sidechains and P3' is any C-terminal residue.. Protease involved in the processing of a variety of prenylated proteins containing the C-terminal CAAX motif, where C is a cysteine modified with an isoprenoid lipid, A is an aliphatic amino acid and X is any C-terminal amino acid. Proteolytically removes the C-terminal three residues of farnesylated proteins, leaving the prenylated cysteine as the new C-terminus. Target proteins include the a-factor mating pheromone and RAS. Its substrate specificity is overlapping but distinct with that of STE24. This chain is CAAX prenyl protease 2 (RCE1), found in Saccharomyces cerevisiae (strain ATCC 204508 / S288c) (Baker's yeast).